The primary structure comprises 280 residues: Nitrogenase iron protein (280 aa).

8-15 is a binding site for ATP; that stretch reads GKGGIGKS. Residue Cys95 participates in [4Fe-4S] cluster binding. Position 98 is an ADP-ribosylarginine; by dinitrogenase reductase ADP-ribosyltransferase (Arg98). Residue Cys128 participates in [4Fe-4S] cluster binding.

Belongs to the NifH/BchL/ChlL family. As to quaternary structure, homodimer. [4Fe-4S] cluster serves as cofactor. The reversible ADP-ribosylation of Arg-98 inactivates the nitrogenase reductase and regulates nitrogenase activity.

The enzyme catalyses N2 + 8 reduced [2Fe-2S]-[ferredoxin] + 16 ATP + 16 H2O = H2 + 8 oxidized [2Fe-2S]-[ferredoxin] + 2 NH4(+) + 16 ADP + 16 phosphate + 6 H(+). In terms of biological role, the key enzymatic reactions in nitrogen fixation are catalyzed by the nitrogenase complex, which has 2 components: the iron protein and the molybdenum-iron protein. This Methanospirillum hungatei JF-1 (strain ATCC 27890 / DSM 864 / NBRC 100397 / JF-1) protein is Nitrogenase iron protein.